The primary structure comprises 174 residues: Neuromedin-U (174 aa).

The N-terminal stretch at 1-37 (MSRAANRRPGLSAGQLAAATASPLLSLLLLLACCADA) is a signal peptide. Residues 38–105 (CRGTPISPQR…EQTEKDNAKR (68 aa)) constitute a propeptide that is removed on maturation. M141 carries the methionine sulfoxide; partial modification. At N166 the chain carries Asparagine amide. Positions 170 to 174 (STSFI) are excised as a propeptide.

Belongs to the NmU family. As to expression, expressed throughout the gastrointestinal tract with highest levels in the duodenum and jejunum. Low levels in spinal cord, hypothalamus, and stomach. Neuromedin-U-23: Expressed in the small intestine and the pituitary gland (at protein level). Neuromedin precursor-related peptides: Expressed in pituitary gland and small intestine (at protein level).

Its subcellular location is the secreted. Ligand for receptors NMUR1 and NMUR2. Receptor-binding is very tight if not irreversible and triggers an increase in the cytosolic Ca(2+) concentration. Stimulates muscle contractions of specific regions of the gastrointestinal tract. In rat, NMU stimulates contractions of stomach circular muscle. In terms of biological role, does not function as a ligand for either NMUR1 or NMUR2. Indirectly induces prolactin release although its potency is much lower than that of neuromedin precursor-related peptide 36. Its function is as follows. Does not function as a ligand for either NMUR1 or NMUR2. Indirectly induces prolactin release from lactotroph cells in the pituitary gland, probably via the hypothalamic dopaminergic system. The sequence is that of Neuromedin-U (Nmu) from Rattus norvegicus (Rat).